Consider the following 1131-residue polypeptide: MLHVSASKGMTEYFKNILDNVKNLYDLAEGCRKSGYDVTDHVEIPLAKDMADRVEGIVGPKNVAERIRELVSDLGKEPAALEIAKEIVEGKFGEFGREVGAEQAVRTALAVITEGIVAAPLEGIAHVKIKKNNDGGEYLAIYFAGPIRSAGGTAQALAVLVGDYVRKNMGLDKFKPTDDEVERYGEEVDLYQSEVTTFQYQPKAEEIRVAVRNISVEITGEATDDVEVSGHRDLPRIETNQIRGGALLALVEGVLLKAPKILRHVDKLGIEGWDWLKELKSKKEELVEEIEEENDEFNYEEEEDLSQYEDYEVEAVTKFIGEVIAGRPVFSHPSKKGGFRLRYGRSRNTGFATDGFHPAIMYLVDDFMAVGTQLKTERPGKATCVVPVDSIEGPIVKLNDKSVLKIDTVEKAKQYRDDVEEILFLGDILVNYGDFLENNHTILPSSWCTEWYEKILKSENLEYTKEFIENPDQKEVVKYAKLTNTPLHPKYTYFWHDISKDNINVLRNWIIGGRYNESNDSWGLTYDPEDPEISIVKRYLELIGCPHTVVDEKVEIFEYYPLLYSLGYDFDEKQDVVEDIEEKLQNTKNNMHFINTIAPFEIRRNAYIYVGARMGRPEKAASRKMKPPVNGLFPIGNAGALVRLINKAVDEGKTDEIEISNVKCSCGNVSLYRTCPFCGSSVEPSGPSRIKLPIKEYWYKALENLKINKAGDVKCIKGMTSKDKIIEPLEKAILRAKNDIFVFKDGTTRFDCTDVPVTHFRPVEIHGDIEKLKSLGYLKDIHGNPLENENQVLELNVQDVIVPESCMDYFLNVSKFIDDLLEKYYKKDRFYNVNKREELVGHLIIGMAPHTSAGMVGRIIGYSKANVGYAHPYFHASKRRNCDGDEDAFFLLLDAFMNFSKRFLPDKRGGQMDAPLVLTTILDPKEVDGEVHNMDSMWEYPLEFYEKSLEGIAPKEIKKIMETVEDRLDKESQYEGIGYTHETLKIDEGPLVCAYKTLGSMMEKTSAQLAVAKKIRATDERDVAEKVIQSHFVPDLIGNLRAFSRQGVRCKCGAKYRRMPLKGICRKCGSRLILTVSKGAVEKYMDVSQTMAEKYNASDYIKQRLEIIRSGIDSLFVNDKRKQVKIEDFFK.

It belongs to the archaeal DNA polymerase II family. In terms of assembly, heterodimer of a large subunit and a small subunit.

It carries out the reaction DNA(n) + a 2'-deoxyribonucleoside 5'-triphosphate = DNA(n+1) + diphosphate. The catalysed reaction is Exonucleolytic cleavage in the 3'- to 5'-direction to yield nucleoside 5'-phosphates.. Functionally, possesses two activities: a DNA synthesis (polymerase) and an exonucleolytic activity that degrades single-stranded DNA in the 3'- to 5'-direction. Has a template-primer preference which is characteristic of a replicative DNA polymerase. The polypeptide is DNA polymerase II large subunit (Methanococcus maripaludis (strain C5 / ATCC BAA-1333)).